The primary structure comprises 274 residues: MLTLYHQERSPDATSNDRDETPETVVREVHALTPAPEDNSRTMTATLPPPPAFRGYFSPPRSATTMSEGENFTTISREFNALVIAGSSMENNELMTRDVTQREDERQDELMRIHEDTDHEEETNPLAIVPDQYPGSGLDPGSDNGPGQSRVGSTVQRVKREEVEAKITAWQTAKLAKINNRFKREDAVINGWFNEQVNKANSWMKKIERKLEERKAKAMEKTQNNVAKAQRKAEERRATAEAKRGTEVAKVVEVANLMRALGRPPAKRSFFSFS.

Over residues 1-30 (MLTLYHQERSPDATSNDRDETPETVVREVH) the composition is skewed to basic and acidic residues. 3 disordered regions span residues 1 to 71 (MLTL…EGEN), 117 to 157 (TDHE…TVQR), and 218 to 245 (AMEK…AKRG). Polar residues-rich tracts occupy residues 61 to 71 (RSATTMSEGEN) and 145 to 156 (GPGQSRVGSTVQ). Residues 204-239 (MKKIERKLEERKAKAMEKTQNNVAKAQRKAEERRAT) adopt a coiled-coil conformation. A compositionally biased stretch (basic and acidic residues) spans 231 to 245 (RKAEERRATAEAKRG).

This sequence belongs to the remorin family. As to quaternary structure, forms homodimer and heterodimer with REM4.1. Interacts with KIN11. Post-translationally, probably ubiquitinated and degraded by the 26S proteasome pathway. Predominantly detected in bud, stem, root, flower, silique, and leaves, and enhanced dramatically in senescence leaf.

The protein resides in the cell membrane. Its function is as follows. Collaborates with REM4.1 to positively regulate the BCTV and BSCTV susceptibility. This is Remorin 4.2 from Arabidopsis thaliana (Mouse-ear cress).